A 161-amino-acid polypeptide reads, in one-letter code: Zinc finger A20 and AN1 domain-containing stress-associated protein 9 (161 aa).

An A20-type zinc finger spans residues 17–51; that stretch reads PEAPILCVNNCGFFGSSMTNNMCSKCYRDFVKVTT. 4 residues coordinate Zn(2+): cysteine 23, cysteine 27, cysteine 39, and cysteine 42. The segment at 62–99 is disordered; sequence FTPASSSKTPLEPAKPDEVPAAAVEDKQAAQEPPKPPS. Positions 75–90 are enriched in basic and acidic residues; that stretch reads AKPDEVPAAAVEDKQA. Residues 96 to 142 form an AN1-type zinc finger; sequence KPPSNRCLSCRKKVGLTGFQCRCGGTFCSTHRYTEAHDCTFDYKKAG. Residues cysteine 102, cysteine 105, cysteine 116, cysteine 118, cysteine 123, histidine 126, histidine 132, and cysteine 134 each coordinate Zn(2+).

Its function is as follows. May be involved in environmental stress response. In Oryza sativa subsp. japonica (Rice), this protein is Zinc finger A20 and AN1 domain-containing stress-associated protein 9 (SAP9).